A 208-amino-acid polypeptide reads, in one-letter code: N-(5'-phosphoribosyl)anthranilate isomerase (208 aa).

The protein belongs to the TrpF family.

It catalyses the reaction N-(5-phospho-beta-D-ribosyl)anthranilate = 1-(2-carboxyphenylamino)-1-deoxy-D-ribulose 5-phosphate. The protein operates within amino-acid biosynthesis; L-tryptophan biosynthesis; L-tryptophan from chorismate: step 3/5. The protein is N-(5'-phosphoribosyl)anthranilate isomerase of Lactiplantibacillus plantarum (strain ATCC BAA-793 / NCIMB 8826 / WCFS1) (Lactobacillus plantarum).